Consider the following 553-residue polypeptide: Putative transport protein YidE (553 aa).

5 consecutive transmembrane segments (helical) span residues 4–24 (IALT…IGNI), 28–48 (GVGF…HFVD), 65–85 (FGLI…FFAS), 95–115 (LFAV…HKIF), and 158–178 (MSYA…MWLM). 2 RCK C-terminal domains span residues 192-276 (KHES…VIGK) and 279-361 (DTSL…VVGN). 6 helical membrane-spanning segments follow: residues 371–391 (MLPV…PLFV), 393–413 (GFPV…ALIL), 437–457 (LGIV…FVDT), 464–484 (LSWI…VGLL), 493–513 (YLTL…LAFA), and 533–553 (LVMF…WGMG).

It belongs to the AAE transporter (TC 2.A.81) family. YidE subfamily.

The protein localises to the cell membrane. This chain is Putative transport protein YidE, found in Salmonella heidelberg (strain SL476).